A 436-amino-acid chain; its full sequence is MFPPIGLATLPKALIRIHGPDATKFVNGLVTTRLLPDIVKKKQHTISENENSHQELSQIIDVHRNWGLMHEDIYDPSNTIYVSRGGINSMFLNSKGRVFTDCFIYAHPFANSSENDHPDYVVEVDESLRTKLQMLLKLHKLAAKVNIEKLENVESHYYYNDTPEFDSFLEELQNNYILTKDPSQAREMAQRLIDDQAIFGPNIPVVGFAVDNRIPNFGIKFLTKQLQNQDPFSSSFKSQFESPSVSAQDVAVRRYTNGLLEQADVSSDVSILPFETNLDFTNGLSLDKGCYVGQELTIRTFNGGTIRKRVVPVQFFELKNVESMAAKHEPEYNLKDAVVDHLSKITQTDLKSLVISRMDGSDATEEHQTSSPFGSSKPVRKRKSGSGKILARHGNVGLALMNLGEIEHQSMFKVTIGDEDDTEIGLKSFVPGWWPQ.

Residues 1–42 constitute a mitochondrion transit peptide; sequence MFPPIGLATLPKALIRIHGPDATKFVNGLVTTRLLPDIVKKK. The segment at 359 to 387 is disordered; it reads DGSDATEEHQTSSPFGSSKPVRKRKSGSG.

Belongs to the GcvT family. CAF17/IBA57 subfamily.

It localises to the mitochondrion matrix. The polypeptide is Iron-sulfur cluster assembly factor IBA57 homolog, mitochondrial (CAF17) (Meyerozyma guilliermondii (strain ATCC 6260 / CBS 566 / DSM 6381 / JCM 1539 / NBRC 10279 / NRRL Y-324) (Yeast)).